Consider the following 216-residue polypeptide: Probable GTP-binding protein EngB (216 aa).

The 174-residue stretch at 43–216 folds into the EngB-type G domain; the sequence is DRIEVCFAGR…TLRSIIAHLD (174 aa). GTP-binding positions include 51–58, 78–82, 96–99, 163–166, and 197–199; these read GRSNVGKS, GRTQE, DLPG, TKAD, and TSS. Mg(2+) contacts are provided by serine 58 and threonine 80.

It belongs to the TRAFAC class TrmE-Era-EngA-EngB-Septin-like GTPase superfamily. EngB GTPase family. The cofactor is Mg(2+).

Its function is as follows. Necessary for normal cell division and for the maintenance of normal septation. In Ruegeria sp. (strain TM1040) (Silicibacter sp.), this protein is Probable GTP-binding protein EngB.